The primary structure comprises 292 residues: Nucleotide-binding protein AZOSEA20610 (292 aa).

ATP is bound at residue 8–15 (GLSGSGKS). 57–60 (DVRS) serves as a coordination point for GTP.

Belongs to the RapZ-like family.

Displays ATPase and GTPase activities. The protein is Nucleotide-binding protein AZOSEA20610 of Aromatoleum aromaticum (strain DSM 19018 / LMG 30748 / EbN1) (Azoarcus sp. (strain EbN1)).